Reading from the N-terminus, the 364-residue chain is UDP-N-acetylglucosamine--N-acetylmuramyl-(pentapeptide) pyrophosphoryl-undecaprenol N-acetylglucosamine transferase (364 aa).

UDP-N-acetyl-alpha-D-glucosamine is bound by residues 10–12, Asn-124, Arg-166, Ser-196, and Gln-297; that span reads TGG.

The protein belongs to the glycosyltransferase 28 family. MurG subfamily.

It is found in the cell membrane. It catalyses the reaction di-trans,octa-cis-undecaprenyl diphospho-N-acetyl-alpha-D-muramoyl-L-alanyl-D-glutamyl-meso-2,6-diaminopimeloyl-D-alanyl-D-alanine + UDP-N-acetyl-alpha-D-glucosamine = di-trans,octa-cis-undecaprenyl diphospho-[N-acetyl-alpha-D-glucosaminyl-(1-&gt;4)]-N-acetyl-alpha-D-muramoyl-L-alanyl-D-glutamyl-meso-2,6-diaminopimeloyl-D-alanyl-D-alanine + UDP + H(+). It functions in the pathway cell wall biogenesis; peptidoglycan biosynthesis. Functionally, cell wall formation. Catalyzes the transfer of a GlcNAc subunit on undecaprenyl-pyrophosphoryl-MurNAc-pentapeptide (lipid intermediate I) to form undecaprenyl-pyrophosphoryl-MurNAc-(pentapeptide)GlcNAc (lipid intermediate II). The sequence is that of UDP-N-acetylglucosamine--N-acetylmuramyl-(pentapeptide) pyrophosphoryl-undecaprenol N-acetylglucosamine transferase from Caldanaerobacter subterraneus subsp. tengcongensis (strain DSM 15242 / JCM 11007 / NBRC 100824 / MB4) (Thermoanaerobacter tengcongensis).